Consider the following 294-residue polypeptide: 4-hydroxy-tetrahydrodipicolinate synthase (294 aa).

Thr47 is a binding site for pyruvate. Residue Tyr135 is the Proton donor/acceptor of the active site. The Schiff-base intermediate with substrate role is filled by Lys163. Residue Ile206 coordinates pyruvate.

It belongs to the DapA family. In terms of assembly, homodimer.

It localises to the cytoplasm. It carries out the reaction L-aspartate 4-semialdehyde + pyruvate = (2S,4S)-4-hydroxy-2,3,4,5-tetrahydrodipicolinate + H2O + H(+). It functions in the pathway amino-acid biosynthesis; L-lysine biosynthesis via DAP pathway; (S)-tetrahydrodipicolinate from L-aspartate: step 3/4. Catalyzes the condensation of (S)-aspartate-beta-semialdehyde [(S)-ASA] and pyruvate to 4-hydroxy-tetrahydrodipicolinate (HTPA). The protein is 4-hydroxy-tetrahydrodipicolinate synthase of Staphylococcus carnosus (strain TM300).